The chain runs to 639 residues: Chaperone protein DnaK (639 aa).

Residue threonine 198 is modified to Phosphothreonine; by autocatalysis. The interval alanine 597–histidine 639 is disordered. A compositionally biased stretch (low complexity) spans serine 603–alanine 617. Over residues glycine 624 to valine 633 the composition is skewed to acidic residues.

Belongs to the heat shock protein 70 family.

Its function is as follows. Acts as a chaperone. The sequence is that of Chaperone protein DnaK from Rhodospirillum rubrum (strain ATCC 11170 / ATH 1.1.1 / DSM 467 / LMG 4362 / NCIMB 8255 / S1).